The sequence spans 581 residues: MSAVELVNELSARFGEAVFGEQPTHDAFPTLWIKPEAMPALHRYLKHEIERPFPLLVDLWAIDETARHHREGQPPSGVTIASHLMSLERNADIRLKCALPADDPRAHTIAEIYPNADWYEREAFDMFGVHFEGRRDHRRILMPPLWDGHPMRKDQPARATERPPFVMTAARFDAEEQALAVDPEALGLPTQRDGVELMILNYGPHSMATHGVFRIVLALDGEEIVAARPDIGFHHRGAEKMGERQSWHQYIPYTDRIDYLGGVMGEMPYLQAVERLCGIAVPERAQTVRIMLCEIFRIMNHLLFYGTLAQDTGAMSPVFYMFTDRERGYRVIEAITGARMHPGWFRIGGLAADLPEGWDALVRDFLDWMPARLDDYEGMVMRNEIFRARTVGIAAYDTATAFDWGITGPGLRATGCGWDMRKARPYGGYQNFEFEVPTGHRGDCYDRARVRVDEIRQSLRIIRQCLDHMPAGPIKADHPLTTPPPRERMLHDIETMIHHFVGSSWGPVVPVGEATGQVESVRGLTQYAVVSDGETTAYRTRIRTPSFAHLQSIATIAPGLTVADLVAYLGSIDYVMSDVDR.

The interval 1 to 172 is NADH dehydrogenase I subunit C; sequence MSAVELVNEL…PPFVMTAARF (172 aa). Residues 196–581 form an NADH dehydrogenase I subunit D region; sequence ELMILNYGPH…IDYVMSDVDR (386 aa).

In the N-terminal section; belongs to the complex I 30 kDa subunit family. This sequence in the C-terminal section; belongs to the complex I 49 kDa subunit family. NDH-1 is composed of 13 different subunits. Subunits NuoB, CD, E, F, and G constitute the peripheral sector of the complex.

The protein localises to the cell inner membrane. The enzyme catalyses a quinone + NADH + 5 H(+)(in) = a quinol + NAD(+) + 4 H(+)(out). NDH-1 shuttles electrons from NADH, via FMN and iron-sulfur (Fe-S) centers, to quinones in the respiratory chain. The immediate electron acceptor for the enzyme in this species is believed to be ubiquinone. Couples the redox reaction to proton translocation (for every two electrons transferred, four hydrogen ions are translocated across the cytoplasmic membrane), and thus conserves the redox energy in a proton gradient. This is NADH-quinone oxidoreductase subunit C/D from Rhodopseudomonas palustris (strain BisB18).